Consider the following 195-residue polypeptide: Flagellar transcriptional regulator FlhC (195 aa).

The Zn(2+) site is built by Cys137, Cys140, Cys157, and Cys160. Residues 165 to 195 (RAGSARRKTTTRKAVAPTHKTTAASRKAVVA) are disordered.

This sequence belongs to the FlhC family. In terms of assembly, heterohexamer composed of two FlhC and four FlhD subunits. Each FlhC binds a FlhD dimer, forming a heterotrimer, and a hexamer assembles by dimerization of two heterotrimers. The cofactor is Zn(2+).

The protein resides in the cytoplasm. Functions in complex with FlhD as a master transcriptional regulator that regulates transcription of several flagellar and non-flagellar operons by binding to their promoter region. Activates expression of class 2 flagellar genes, including fliA, which is a flagellum-specific sigma factor that turns on the class 3 genes. Also regulates genes whose products function in a variety of physiological pathways. The protein is Flagellar transcriptional regulator FlhC of Thauera aminoaromatica.